Consider the following 223-residue polypeptide: MKFAVLVFPGSNCDRDMFNAAIKSGVEAEYVDYRETSLSGFDGVLIPGGFSFGDYLRSGAMASVAPVISEVKRLAAEGKPVLGVCNGFQILTEIGLLPGALLHNDSHLFISRNEELEIVNNQTAFTNLYEQGEKVIYPVAHGEGHYYCTDEIYQKLKANNQIILKYVNNPNGSYDDIAGIVNEKGNVCGMMPHPERALETLLGTDSGVKLFEAMVKSWREQHV.

The Glutamine amidotransferase type-1 domain occupies F3–V223. The active-site Nucleophile is the C85. Catalysis depends on residues H193 and E195.

As to quaternary structure, part of the FGAM synthase complex composed of 1 PurL, 1 PurQ and 2 PurS subunits.

Its subcellular location is the cytoplasm. The enzyme catalyses N(2)-formyl-N(1)-(5-phospho-beta-D-ribosyl)glycinamide + L-glutamine + ATP + H2O = 2-formamido-N(1)-(5-O-phospho-beta-D-ribosyl)acetamidine + L-glutamate + ADP + phosphate + H(+). It catalyses the reaction L-glutamine + H2O = L-glutamate + NH4(+). The protein operates within purine metabolism; IMP biosynthesis via de novo pathway; 5-amino-1-(5-phospho-D-ribosyl)imidazole from N(2)-formyl-N(1)-(5-phospho-D-ribosyl)glycinamide: step 1/2. Functionally, part of the phosphoribosylformylglycinamidine synthase complex involved in the purines biosynthetic pathway. Catalyzes the ATP-dependent conversion of formylglycinamide ribonucleotide (FGAR) and glutamine to yield formylglycinamidine ribonucleotide (FGAM) and glutamate. The FGAM synthase complex is composed of three subunits. PurQ produces an ammonia molecule by converting glutamine to glutamate. PurL transfers the ammonia molecule to FGAR to form FGAM in an ATP-dependent manner. PurS interacts with PurQ and PurL and is thought to assist in the transfer of the ammonia molecule from PurQ to PurL. This chain is Phosphoribosylformylglycinamidine synthase subunit PurQ, found in Staphylococcus aureus (strain MRSA252).